A 236-amino-acid polypeptide reads, in one-letter code: MQQNTNVDPQEIAKFERMAETWWDLNGEFKPLHLLNPLRLNYIDQTAGGIFGKKVLDVGCGGGILSESMARIGAIVDGLDMGEEPLEVARLHALETGVSINYVKNTAEAHREDHREYYDVVTCMEMLEHVPDPQSVIQACCDMVKPGGFVFFSTINRNVRSFVETIIGAEYLLKMLPIGTHDHNKFIKPSELIDLVDNTELICKDALGITYNPLTGIFKYTSKVDVNYMIATQKVD.

Positions 39, 59, 80, and 124 each coordinate S-adenosyl-L-methionine.

This sequence belongs to the methyltransferase superfamily. UbiG/COQ3 family.

The enzyme catalyses a 3-demethylubiquinol + S-adenosyl-L-methionine = a ubiquinol + S-adenosyl-L-homocysteine + H(+). It catalyses the reaction a 3-(all-trans-polyprenyl)benzene-1,2-diol + S-adenosyl-L-methionine = a 2-methoxy-6-(all-trans-polyprenyl)phenol + S-adenosyl-L-homocysteine + H(+). The protein operates within cofactor biosynthesis; ubiquinone biosynthesis. Functionally, O-methyltransferase that catalyzes the 2 O-methylation steps in the ubiquinone biosynthetic pathway. This Shewanella oneidensis (strain ATCC 700550 / JCM 31522 / CIP 106686 / LMG 19005 / NCIMB 14063 / MR-1) protein is Ubiquinone biosynthesis O-methyltransferase.